A 112-amino-acid polypeptide reads, in one-letter code: High mobility group protein D (112 aa).

The HMG box DNA-binding region spans 5–71 (PKRPLSAYML…DYDRAVKEFE (67 aa)). At Ser-10 the chain carries Phosphoserine. A Phosphotyrosine modification is found at Tyr-12. Positions 72–112 (ANGGSSAANGGGAKKRAKPAKKVAKKSKKEESDEDDDDESE) are disordered. The segment covering 84–98 (AKKRAKPAKKVAKKS) has biased composition (basic residues). Residues Ser-103 and Ser-111 each carry the phosphoserine modification. The span at 103–112 (SDEDDDDESE) shows a compositional bias: acidic residues.

The protein belongs to the HMGB family.

It localises to the nucleus. Its subcellular location is the chromosome. Functionally, binds preferentially single-stranded DNA and unwinds double-stranded DNA. Prefers sites containing the sequence 5'-ttg-3'. Facilitates DNA bending. Associated with early embryonic chromatin in the absence of histone H1. In Drosophila melanogaster (Fruit fly), this protein is High mobility group protein D (HmgD).